Consider the following 351-residue polypeptide: Rhodopsin (351 aa).

Residues 1 to 36 (MNGTEGPYFYVPMVNTTGVVRSPYEYPQYYLVNPAA) are Extracellular-facing. 2 N-linked (GlcNAc...) asparagine glycosylation sites follow: N2 and N15. A helical membrane pass occupies residues 37–61 (FAVLGAYMFFLIIFGFPINFLTLYV). Residues 62 to 73 (TLEHKKLRTPLN) are Cytoplasmic-facing. A helical membrane pass occupies residues 74-96 (YILLNLAVADLFMVIGGFTTTMY). Residues 97–110 (SSMHGYFVLGRLGC) are Extracellular-facing. A disulfide bond links C110 and C187. The helical transmembrane segment at 111–133 (NLEGFSATLGGMISLWSLAVLAI) threads the bilayer. The short motif at 134-136 (ERW) is the 'Ionic lock' involved in activated form stabilization element. At 134–152 (ERWVVVCKPTSNFRFGENH) the chain is on the cytoplasmic side. Residues 153-173 (AIMGVSLTWTMALACTVPPLV) form a helical membrane-spanning segment. Over 174–202 (GWSRYIPEGMQCSCGIDYYTRAEGFNNES) the chain is Extracellular. N200 carries N-linked (GlcNAc...) asparagine glycosylation. The helical transmembrane segment at 203–224 (FVLYMFFCHFMVPLIIIFFCYG) threads the bilayer. The Cytoplasmic portion of the chain corresponds to 225–252 (RLLCAVKEAAAAQQESETTQRAEREVTR). The helical transmembrane segment at 253–274 (MVILMVIGYLVCWLPYASVAWF) threads the bilayer. Topologically, residues 275 to 286 (IFTHQGSEFGPL) are extracellular. The chain crosses the membrane as a helical span at residues 287–308 (FMTIPAFFAKSSSIYNPVIYIC). Residue K296 is modified to N6-(retinylidene)lysine. Residues 309-351 (MNKQFRNCMITTLFCGKNPFEGEEEGASSTKTEASSASSVSPA) lie on the Cytoplasmic side of the membrane. The S-palmitoyl cysteine moiety is linked to residue C323. Residues 330–351 (GEEEGASSTKTEASSASSVSPA) are disordered. Positions 335–351 (ASSTKTEASSASSVSPA) are enriched in low complexity.

The protein belongs to the G-protein coupled receptor 1 family. Opsin subfamily. Post-translationally, phosphorylated on some or all of the serine and threonine residues present in the C-terminal region. In terms of processing, contains one covalently linked retinal chromophore.

Its subcellular location is the membrane. It localises to the cell projection. The protein localises to the cilium. The protein resides in the photoreceptor outer segment. Functionally, photoreceptor required for image-forming vision at low light intensity. While most salt water fish species use retinal as chromophore, most freshwater fish use 3-dehydroretinal, or a mixture of retinal and 3-dehydroretinal. Light-induced isomerization of 11-cis to all-trans retinal triggers a conformational change that activates signaling via G-proteins. Subsequent receptor phosphorylation mediates displacement of the bound G-protein alpha subunit by arrestin and terminates signaling. The sequence is that of Rhodopsin (rho) from Neoniphon sammara (Spotfin squirrelfish).